The primary structure comprises 127 residues: MFKEFKEFAFKGNVLDLAIGVIIGAAFGKIVTALVDVVIMPIISIILSLILNDVNIATWQFSIGATPIMIGVLIKTIIEFLIIAFVLFLFVKGINSTRRKQEVEAPAAPPPSEEVLLLREIRDSLQK.

3 consecutive transmembrane segments (helical) span residues 8-28, 30-50, and 70-90; these read FAFK…AAFG, IVTA…LSLI, and IGVL…LFLF.

This sequence belongs to the MscL family. Homopentamer.

The protein localises to the cell membrane. In terms of biological role, channel that opens in response to stretch forces in the membrane lipid bilayer. May participate in the regulation of osmotic pressure changes within the cell. The sequence is that of Large-conductance mechanosensitive channel from Herpetosiphon aurantiacus (strain ATCC 23779 / DSM 785 / 114-95).